Consider the following 98-residue polypeptide: NADH-ubiquinone oxidoreductase chain 4L (98 aa).

3 helical membrane-spanning segments follow: residues 1–21 (MPYI…GMLI), 29–49 (SLLC…LTIL), and 61–81 (IILL…LVMV).

This sequence belongs to the complex I subunit 4L family. Core subunit of respiratory chain NADH dehydrogenase (Complex I) which is composed of 45 different subunits.

Its subcellular location is the mitochondrion inner membrane. It carries out the reaction a ubiquinone + NADH + 5 H(+)(in) = a ubiquinol + NAD(+) + 4 H(+)(out). In terms of biological role, core subunit of the mitochondrial membrane respiratory chain NADH dehydrogenase (Complex I) which catalyzes electron transfer from NADH through the respiratory chain, using ubiquinone as an electron acceptor. Part of the enzyme membrane arm which is embedded in the lipid bilayer and involved in proton translocation. This Cephalopachus bancanus (Western tarsier) protein is NADH-ubiquinone oxidoreductase chain 4L (MT-ND4L).